The chain runs to 359 residues: Type-1 angiotensin II receptor B (359 aa).

Topologically, residues 1–25 (MTLNSSTEDGIKRIQDDCPKAGRHN) are extracellular. The N-linked (GlcNAc...) asparagine glycan is linked to N4. Q15 and D17 together coordinate angiotensin II. Intrachain disulfides connect C18-C274 and C101-C180. Residues 26–55 (YIFVMIPTLYSIIFVVGIFGNSLVVIVIYF) form a helical membrane-spanning segment. At 56-61 (YMKLKT) the chain is on the cytoplasmic side. Residues 62–89 (VASVFLLNLALADLCFLLTLPLWAVYTA) traverse the membrane as a helical segment. Residues 90 to 98 (MEYRWPFGN) are Extracellular-facing. Residues 99-125 (HLCKIASASVSFNLYASVFLLTCLSID) form a helical membrane-spanning segment. At 126–141 (RYLAIVHPMKSRLRRT) the chain is on the cytoplasmic side. Residues 142-165 (MLVAKVTCIIIWLMAGLASLPAVI) form a helical membrane-spanning segment. Over 166–190 (YRNVYFIENTNITVCAFHYESQNST) the chain is Extracellular. Angiotensin II is bound at residue R167. N176 is a glycosylation site (N-linked (GlcNAc...) asparagine). Angiotensin II contacts are provided by F182, H183, and Y184. N188 carries N-linked (GlcNAc...) asparagine glycosylation. Residues 191 to 216 (LPIGLGLTKNILGFVFPFLIILTSYT) traverse the membrane as a helical segment. Residue K199 participates in angiotensin II binding. Topologically, residues 217–239 (LIWKALKKAYKIQKNTPRNDDIF) are cytoplasmic. A helical membrane pass occupies residues 240-268 (RIIMAIVLFFFFSWVPHQIFTFLDVLIQL). Residues 269 to 278 (GIIRDCEIAD) lie on the Extracellular side of the membrane. The chain crosses the membrane as a helical span at residues 279-304 (IVDTAMPITICIAYFNNCLNPLFYGF). Residues 305 to 359 (LGKKFKKYFLQLLKYIPPTAKSHAGLSTKMSTLSYRPSDNMSSSAKKSASFFEVE) are Cytoplasmic-facing. The interval 339–359 (YRPSDNMSSSAKKSASFFEVE) is disordered. The span at 346–359 (SSSAKKSASFFEVE) shows a compositional bias: low complexity.

The protein belongs to the G-protein coupled receptor 1 family. In terms of assembly, interacts with MAS1. Interacts with ARRB1. Interacts with FLNA (via filamin repeat 21); increases PKA-mediated phosphorylation of FLNA. In terms of processing, C-terminal Ser or Thr residues may be phosphorylated. Is expressed in the liver, kidney, aorta, lung, uterus, ovary, spleen, heart, and vascular smooth muscle cell. Expressed most abundantly in the adrenal gland.

It is found in the cell membrane. Its function is as follows. Receptor for angiotensin II, a vasoconstricting peptide, which acts as a key regulator of blood pressure and sodium retention by the kidney. The activated receptor in turn couples to G-alpha proteins G(q) (GNAQ, GNA11, GNA14 or GNA15) and thus activates phospholipase C and increases the cytosolic Ca(2+) concentrations, which in turn triggers cellular responses such as stimulation of protein kinase C. The chain is Type-1 angiotensin II receptor B (Agtr1b) from Rattus norvegicus (Rat).